The primary structure comprises 161 residues: Large ribosomal subunit protein eL21 (161 aa).

This sequence belongs to the eukaryotic ribosomal protein eL21 family.

This is Large ribosomal subunit protein eL21 (RPL21) from Cyanophora paradoxa.